Here is a 485-residue protein sequence, read N- to C-terminus: Aspartyl/glutamyl-tRNA(Asn/Gln) amidotransferase subunit B (485 aa).

Belongs to the GatB/GatE family. GatB subfamily. As to quaternary structure, heterotrimer of A, B and C subunits.

The enzyme catalyses L-glutamyl-tRNA(Gln) + L-glutamine + ATP + H2O = L-glutaminyl-tRNA(Gln) + L-glutamate + ADP + phosphate + H(+). It catalyses the reaction L-aspartyl-tRNA(Asn) + L-glutamine + ATP + H2O = L-asparaginyl-tRNA(Asn) + L-glutamate + ADP + phosphate + 2 H(+). Its function is as follows. Allows the formation of correctly charged Asn-tRNA(Asn) or Gln-tRNA(Gln) through the transamidation of misacylated Asp-tRNA(Asn) or Glu-tRNA(Gln) in organisms which lack either or both of asparaginyl-tRNA or glutaminyl-tRNA synthetases. The reaction takes place in the presence of glutamine and ATP through an activated phospho-Asp-tRNA(Asn) or phospho-Glu-tRNA(Gln). The sequence is that of Aspartyl/glutamyl-tRNA(Asn/Gln) amidotransferase subunit B from Anaplasma marginale (strain Florida).